Here is a 586-residue protein sequence, read N- to C-terminus: CTP synthase (586 aa).

Positions 1–265 (MVRFIFVTGG…ENKVLNFFNI (265 aa)) are amidoligase domain. Position 13 (S13) interacts with CTP. A UTP-binding site is contributed by S13. ATP-binding positions include 14-19 (SLGKGI) and D71. Mg(2+) contacts are provided by D71 and E139. CTP contacts are provided by residues 146–148 (DIE), 186–191 (KTKPTQ), and K222. Residues 186 to 191 (KTKPTQ) and K222 each bind UTP. Residues 290–582 (KIAIITKYHK…IKATIEYNKS (293 aa)) enclose the Glutamine amidotransferase type-1 domain. G352 lines the L-glutamine pocket. C379 functions as the Nucleophile; for glutamine hydrolysis in the catalytic mechanism. Residues 380–383 (FGMQ) and E403 contribute to the L-glutamine site. The RPE1 insert domain occupies 429–473 (AHISKCTYSEAFECDASTVYTNIHEDSNNLSTDKLQIETNFRNMS). Residue R510 coordinates L-glutamine. Catalysis depends on residues H555 and E557.

The protein belongs to the CTP synthase family. Homotetramer.

It catalyses the reaction UTP + L-glutamine + ATP + H2O = CTP + L-glutamate + ADP + phosphate + 2 H(+). The catalysed reaction is L-glutamine + H2O = L-glutamate + NH4(+). It carries out the reaction UTP + NH4(+) + ATP = CTP + ADP + phosphate + 2 H(+). The protein operates within pyrimidine metabolism; CTP biosynthesis via de novo pathway; CTP from UDP: step 2/2. Its activity is regulated as follows. Allosterically activated by GTP, when glutamine is the substrate; GTP has no effect on the reaction when ammonia is the substrate. The allosteric effector GTP functions by stabilizing the protein conformation that binds the tetrahedral intermediate(s) formed during glutamine hydrolysis. Inhibited by the product CTP, via allosteric rather than competitive inhibition. Functionally, catalyzes the ATP-dependent amination of UTP to CTP with either L-glutamine or ammonia as the source of nitrogen. Regulates intracellular CTP levels through interactions with the four ribonucleotide triphosphates. This Rickettsia prowazekii (strain Madrid E) protein is CTP synthase.